The following is a 384-amino-acid chain: 8-amino-7-oxononanoate synthase (384 aa).

Arg-21 provides a ligand contact to substrate. Gly-108–Phe-109 lines the pyridoxal 5'-phosphate pocket. Residue His-133 coordinates substrate. Pyridoxal 5'-phosphate-binding residues include Ser-179, His-207, and Thr-233. Lys-236 bears the N6-(pyridoxal phosphate)lysine mark. Substrate is bound at residue Thr-352.

This sequence belongs to the class-II pyridoxal-phosphate-dependent aminotransferase family. BioF subfamily. In terms of assembly, homodimer. It depends on pyridoxal 5'-phosphate as a cofactor.

It carries out the reaction 6-carboxyhexanoyl-[ACP] + L-alanine + H(+) = (8S)-8-amino-7-oxononanoate + holo-[ACP] + CO2. Its pathway is cofactor biosynthesis; biotin biosynthesis. Its function is as follows. Catalyzes the decarboxylative condensation of pimeloyl-[acyl-carrier protein] and L-alanine to produce 8-amino-7-oxononanoate (AON), [acyl-carrier protein], and carbon dioxide. The protein is 8-amino-7-oxononanoate synthase of Shigella sonnei (strain Ss046).